A 436-amino-acid polypeptide reads, in one-letter code: UPF0597 protein YhaM (436 aa).

Belongs to the UPF0597 family.

This chain is UPF0597 protein YhaM, found in Escherichia coli (strain SE11).